We begin with the raw amino-acid sequence, 102 residues long: MTLTLAHYLVLGAILFAIGIFGIFLNRRNLIILLMSIELVLLAVNMNFVAFSSWFGDTAGQVFVFFILTVAAAEAAIGLAILVLLFRNLNTINVDELDRLKG.

The next 3 helical transmembrane spans lie at 5–25 (LAHYLVLGAILFAIGIFGIFL), 31–51 (IILLMSIELVLLAVNMNFVAF), and 62–82 (VFVFFILTVAAAEAAIGLAIL).

Belongs to the complex I subunit 4L family. NDH-1 is composed of 14 different subunits. Subunits NuoA, H, J, K, L, M, N constitute the membrane sector of the complex.

Its subcellular location is the cell inner membrane. It catalyses the reaction a quinone + NADH + 5 H(+)(in) = a quinol + NAD(+) + 4 H(+)(out). In terms of biological role, NDH-1 shuttles electrons from NADH, via FMN and iron-sulfur (Fe-S) centers, to quinones in the respiratory chain. The immediate electron acceptor for the enzyme in this species is believed to be ubiquinone. Couples the redox reaction to proton translocation (for every two electrons transferred, four hydrogen ions are translocated across the cytoplasmic membrane), and thus conserves the redox energy in a proton gradient. In Bordetella petrii (strain ATCC BAA-461 / DSM 12804 / CCUG 43448), this protein is NADH-quinone oxidoreductase subunit K.